Reading from the N-terminus, the 106-residue chain is Isocitrate dehydrogenase [NAD] subunit gamma, mitochondrial (106 aa).

It belongs to the isocitrate and isopropylmalate dehydrogenases family. In terms of assembly, heterooligomer of subunits alpha (IDH3A), beta (IDH3B), and gamma (IDH3G) in the apparent ratio of 2:1:1. The heterodimer containing one IDH3A and one IDH3B subunit and the heterodimer containing one IDH3A and one IDH3G subunit assemble into a heterotetramer (which contains two subunits of IDH3A, one of IDH3B and one of IDH3G) and further into the heterooctamer.

It is found in the mitochondrion. With respect to regulation, the heterotetramer and the heterodimer composed of IDH3A and IDH3G subunits can be allosterically activated by citrate (CIT) or/and ADP, and the two activators can act independently or synergistically. The heterodimer composed of IDH3A and IDH3B subunits cannot be allosterically regulated and the allosteric regulation of the heterotetramer is through the IDH3G subunit and not the IDH3B subunit. The IDH3G subunit contains the allosteric site which consists of a CIT-binding site and an ADP-binding site, and the binding of CIT and ADP causes conformational changes at the allosteric site which are transmitted to the active site in the catalytic subunit (IDH3A) through a cascade of conformational changes at the heterodimer interface, leading to stabilization of the isocitrate-binding at the active site and thus activation of the enzyme. ATP can activate the heterotetramer and the heterodimer composed of IDH3A and IDH3G subunits at low concentrations but inhibits their activities at high concentrations, whereas ATP exhibits only inhibitory effect on the heterodimer composed of IDH3A and IDH3B subunits. In terms of biological role, regulatory subunit which plays a role in the allosteric regulation of the enzyme catalyzing the decarboxylation of isocitrate (ICT) into alpha-ketoglutarate. The heterodimer composed of the alpha (IDH3A) and beta (IDH3B) subunits and the heterodimer composed of the alpha (IDH3A) and gamma (IDH3G) subunits, have considerable basal activity but the full activity of the heterotetramer (containing two subunits of IDH3A, one of IDH3B and one of IDH3G) requires the assembly and cooperative function of both heterodimers. The polypeptide is Isocitrate dehydrogenase [NAD] subunit gamma, mitochondrial (IDH3G) (Sus scrofa (Pig)).